The primary structure comprises 123 residues: MAIAKEDILAAVEGMTVLELNELVKAFEEKFGVSAAAVAVAGPAGGAAAAVEEKTEFTVVLTEAGSNKVAVIKAVRELTGLGLKEAKDVVDGAPKAVKEGVDKAAAEEAKKKLEEAGAKVEVK.

It belongs to the bacterial ribosomal protein bL12 family. As to quaternary structure, homodimer. Part of the ribosomal stalk of the 50S ribosomal subunit. Forms a multimeric L10(L12)X complex, where L10 forms an elongated spine to which 2 to 4 L12 dimers bind in a sequential fashion. Binds GTP-bound translation factors.

In terms of biological role, forms part of the ribosomal stalk which helps the ribosome interact with GTP-bound translation factors. Is thus essential for accurate translation. The protein is Large ribosomal subunit protein bL12 of Burkholderia vietnamiensis (strain G4 / LMG 22486) (Burkholderia cepacia (strain R1808)).